A 111-amino-acid chain; its full sequence is Fertilization-influencing membrane protein (111 aa).

A signal peptide spans 1-23; the sequence is MKLWLWVAVGVWMLMAELGTIET. A helical transmembrane segment spans residues 85 to 105; the sequence is ILVGTLVVAFFFLLFQFCLHV.

In terms of tissue distribution, testis-specific.

Its subcellular location is the cell membrane. It is found in the secreted. Plays a role in sperm-oocyte fusion process during fertilization. The chain is Fertilization-influencing membrane protein from Mus musculus (Mouse).